The following is a 611-amino-acid chain: uncharacterized protein (611 aa).

This sequence belongs to the metallo-dependent hydrolases superfamily. N-acyl-D-amino-acid deacylase family.

This is an uncharacterized protein from Mycobacterium bovis (strain ATCC BAA-935 / AF2122/97).